Reading from the N-terminus, the 229-residue chain is Large ribosomal subunit protein uL1 (229 aa).

The protein belongs to the universal ribosomal protein uL1 family. Part of the 50S ribosomal subunit.

Functionally, binds directly to 23S rRNA. The L1 stalk is quite mobile in the ribosome, and is involved in E site tRNA release. Its function is as follows. Protein L1 is also a translational repressor protein, it controls the translation of the L11 operon by binding to its mRNA. The protein is Large ribosomal subunit protein uL1 of Mannheimia succiniciproducens (strain KCTC 0769BP / MBEL55E).